A 444-amino-acid chain; its full sequence is Spermidine/putrescine import ATP-binding protein PotA (444 aa).

Positions 11–332 (ISLVDVDKEF…PVNKWVANFI (322 aa)) constitute an ABC transporter domain. An ATP-binding site is contributed by 43-50 (GPSGSGKT). The tract at residues 111–201 (RIKKKAEEIP…ESFKKKYLTR (91 aa)) is insert.

This sequence belongs to the ABC transporter superfamily. Spermidine/putrescine importer (TC 3.A.1.11.1) family. In terms of assembly, the complex is composed of two ATP-binding proteins (PotA), two transmembrane proteins (PotB and PotC) and a solute-binding protein (PotD).

The protein localises to the cell membrane. It catalyses the reaction ATP + H2O + polyamine-[polyamine-binding protein]Side 1 = ADP + phosphate + polyamineSide 2 + [polyamine-binding protein]Side 1.. Part of the ABC transporter complex PotABCD involved in spermidine/putrescine import. Responsible for energy coupling to the transport system. The chain is Spermidine/putrescine import ATP-binding protein PotA from Mesomycoplasma hyopneumoniae (strain 232) (Mycoplasma hyopneumoniae).